The sequence spans 97 residues: Large ribosomal subunit protein uL23 (97 aa).

Belongs to the universal ribosomal protein uL23 family. As to quaternary structure, part of the 50S ribosomal subunit. Contacts protein L29, and trigger factor when it is bound to the ribosome.

One of the early assembly proteins it binds 23S rRNA. One of the proteins that surrounds the polypeptide exit tunnel on the outside of the ribosome. Forms the main docking site for trigger factor binding to the ribosome. The polypeptide is Large ribosomal subunit protein uL23 (Allorhizobium ampelinum (strain ATCC BAA-846 / DSM 112012 / S4) (Agrobacterium vitis (strain S4))).